Reading from the N-terminus, the 473-residue chain is Aspartyl/glutamyl-tRNA(Asn/Gln) amidotransferase subunit B (473 aa).

The protein belongs to the GatB/GatE family. GatB subfamily. In terms of assembly, heterotrimer of A, B and C subunits.

It carries out the reaction L-glutamyl-tRNA(Gln) + L-glutamine + ATP + H2O = L-glutaminyl-tRNA(Gln) + L-glutamate + ADP + phosphate + H(+). The catalysed reaction is L-aspartyl-tRNA(Asn) + L-glutamine + ATP + H2O = L-asparaginyl-tRNA(Asn) + L-glutamate + ADP + phosphate + 2 H(+). Functionally, allows the formation of correctly charged Asn-tRNA(Asn) or Gln-tRNA(Gln) through the transamidation of misacylated Asp-tRNA(Asn) or Glu-tRNA(Gln) in organisms which lack either or both of asparaginyl-tRNA or glutaminyl-tRNA synthetases. The reaction takes place in the presence of glutamine and ATP through an activated phospho-Asp-tRNA(Asn) or phospho-Glu-tRNA(Gln). The chain is Aspartyl/glutamyl-tRNA(Asn/Gln) amidotransferase subunit B from Campylobacter hominis (strain ATCC BAA-381 / DSM 21671 / CCUG 45161 / LMG 19568 / NCTC 13146 / CH001A).